A 258-amino-acid polypeptide reads, in one-letter code: Imidazole glycerol phosphate synthase subunit HisF (258 aa).

Catalysis depends on residues Asp11 and Asp130.

It belongs to the HisA/HisF family. In terms of assembly, heterodimer of HisH and HisF.

It localises to the cytoplasm. The catalysed reaction is 5-[(5-phospho-1-deoxy-D-ribulos-1-ylimino)methylamino]-1-(5-phospho-beta-D-ribosyl)imidazole-4-carboxamide + L-glutamine = D-erythro-1-(imidazol-4-yl)glycerol 3-phosphate + 5-amino-1-(5-phospho-beta-D-ribosyl)imidazole-4-carboxamide + L-glutamate + H(+). It functions in the pathway amino-acid biosynthesis; L-histidine biosynthesis; L-histidine from 5-phospho-alpha-D-ribose 1-diphosphate: step 5/9. IGPS catalyzes the conversion of PRFAR and glutamine to IGP, AICAR and glutamate. The HisF subunit catalyzes the cyclization activity that produces IGP and AICAR from PRFAR using the ammonia provided by the HisH subunit. In Escherichia coli O17:K52:H18 (strain UMN026 / ExPEC), this protein is Imidazole glycerol phosphate synthase subunit HisF.